Reading from the N-terminus, the 203-residue chain is Non-specific lipid transfer protein GPI-anchored 20 (203 aa).

An N-terminal signal peptide occupies residues 1-21; the sequence is MSKIISLVVAMIAVLALPIRG. Intrachain disulfides connect Cys29/Cys74, Cys40/Cys58, Cys59/Cys99, and Cys72/Cys108. N-linked (GlcNAc...) asparagine glycans are attached at residues Asn46, Asn50, and Asn88. Positions 119 to 182 are disordered; the sequence is GPAATFGPSM…TSRPSETPSS (64 aa). Composition is skewed to polar residues over residues 144–156 and 169–179; these read AAQT…TRPF and DGGSTSRPSET. Residue Ser172 is the site of GPI-anchor amidated serine attachment. Residues 173 to 203 constitute a propeptide, removed in mature form; sequence TSRPSETPSSAYALSPSLLFFSIALVALKFY.

It belongs to the plant LTP family. As to expression, expressed in seedlings, preferentially in hypocotyls and roots. Also observed in siliques and sepals.

It localises to the cell membrane. Its function is as follows. Probable lipid transfer protein. In Arabidopsis thaliana (Mouse-ear cress), this protein is Non-specific lipid transfer protein GPI-anchored 20.